We begin with the raw amino-acid sequence, 314 residues long: Putative S-adenosyl-L-methionine-dependent methyltransferase MUL_4402 (314 aa).

S-adenosyl-L-methionine-binding positions include aspartate 132 and 161-162 (DL). Positions 291–314 (RPVPDDAEGPVPPTLFVSAHRPAA) are disordered.

It belongs to the UPF0677 family.

In terms of biological role, exhibits S-adenosyl-L-methionine-dependent methyltransferase activity. This Mycobacterium ulcerans (strain Agy99) protein is Putative S-adenosyl-L-methionine-dependent methyltransferase MUL_4402.